The following is a 175-amino-acid chain: S-fimbrial protein subunit SfaG (175 aa).

A signal peptide spans 1 to 27 (MVKDIIKTVTFSCMLAGSMFVTCHVCA). A disulfide bridge links C43 with C83.

Belongs to the fimbrial protein family.

It is found in the fimbrium. Fimbriae (also called pili), polar filaments radiating from the surface of the bacterium to a length of 0.5-1.5 micrometers and numbering 100-300 per cell, enable bacteria to colonize the epithelium of specific host organs. Its function is as follows. A minor fimbrial subunit. This protein is necessary for full expression of S-specific binding. S-fimbrial adhesins enable pathogenic E.coli causing urinary-tract infections or newborn meningitis to attach to glycoproteins terminating with alpha-sialic acid-(2-3)-beta-Gal. The sequence is that of S-fimbrial protein subunit SfaG (sfaG) from Escherichia coli O6:K15:H31 (strain 536 / UPEC).